The sequence spans 186 residues: Peptidyl-tRNA hydrolase (186 aa).

Position 14 (Tyr-14) interacts with tRNA. His-19 serves as the catalytic Proton acceptor. TRNA contacts are provided by Tyr-61, Asn-63, and Asn-107.

The protein belongs to the PTH family. Monomer.

It localises to the cytoplasm. It carries out the reaction an N-acyl-L-alpha-aminoacyl-tRNA + H2O = an N-acyl-L-amino acid + a tRNA + H(+). Functionally, hydrolyzes ribosome-free peptidyl-tRNAs (with 1 or more amino acids incorporated), which drop off the ribosome during protein synthesis, or as a result of ribosome stalling. Catalyzes the release of premature peptidyl moieties from peptidyl-tRNA molecules trapped in stalled 50S ribosomal subunits, and thus maintains levels of free tRNAs and 50S ribosomes. In Helicobacter pylori (strain J99 / ATCC 700824) (Campylobacter pylori J99), this protein is Peptidyl-tRNA hydrolase.